The following is a 52-amino-acid chain: UPF0391 membrane protein Avin_10980 (52 aa).

Transmembrane regions (helical) follow at residues 4-24 and 29-49; these read WSII…GGIA and GIAK…LLFG.

The protein belongs to the UPF0391 family.

Its subcellular location is the cell membrane. This is UPF0391 membrane protein Avin_10980 from Azotobacter vinelandii (strain DJ / ATCC BAA-1303).